Reading from the N-terminus, the 116-residue chain is Large ribosomal subunit protein bL20 (116 aa).

The protein belongs to the bacterial ribosomal protein bL20 family.

Binds directly to 23S ribosomal RNA and is necessary for the in vitro assembly process of the 50S ribosomal subunit. It is not involved in the protein synthesizing functions of that subunit. This Mycoplasmopsis synoviae (strain 53) (Mycoplasma synoviae) protein is Large ribosomal subunit protein bL20.